We begin with the raw amino-acid sequence, 268 residues long: MYKDIKVDPAQLEAALDARLKIRAGFDKPTAGMAAGMTQVNMISVPRDWAYDFLLYAHRNPQSCPVLDVLEEGIYATKLAADSDIRTDFPRYRIWKDGEMVDEVTDAREIYNAHPDLVTFLIGCSFSFETALQEAGIEVRHIHDDTNVPMYLSNIKCEPAGRISGNMVVSMRPIPSHQISEAVKITARMPSVHGAPVHIGHPESLGIKDVNKPDFGDASRIEAGEIPVFWACGVTPQAAVMNSKIPFAISHAPGYMFITDIPDRAWIG.

The protein belongs to the D-glutamate cyclase family.

The chain is Putative hydro-lyase A1S_1268 from Acinetobacter baumannii (strain ATCC 17978 / DSM 105126 / CIP 53.77 / LMG 1025 / NCDC KC755 / 5377).